The chain runs to 425 residues: Divalent metal cation transporter MntH (425 aa).

11 helical membrane-spanning segments follow: residues 30 to 50 (LLPFLGPAFIAAIAYIDPGNF), 61 to 81 (GYMLLWVILFSNIMALLIQSL), 107 to 127 (IGLWIQGELVIIATDLAEFIG), 134 to 154 (LLFGIPMLEASIIAAIGSFAI), 167 to 187 (AGIAGMLFVVVIAFALQTFFA), 209 to 231 (VLLAAGILGATVMPHAIYLHSAL), 255 to 275 (ILIAMLIAGAINASMLIVAAA), 294 to 314 (FGHLVSPMSAALFGIGLLVAG), 344 to 364 (FITIIPPILIIASGVNPTTAL), 365 to 385 (VLSQVVLSFGIAFALIPLIMF), and 401 to 421 (ITVVSWLIAVLIVALNVFLIV).

This sequence belongs to the NRAMP family.

It is found in the cell membrane. In terms of biological role, h(+)-stimulated, divalent metal cation uptake system. Involved in manganese uptake. Can probably also transport cadmium, cobalt, copper and zinc, but not iron. May be the predominant transporter of manganese during logarithmic phase growth. This chain is Divalent metal cation transporter MntH, found in Bacillus subtilis (strain 168).